We begin with the raw amino-acid sequence, 110 residues long: Large ribosomal subunit protein uL22 (110 aa).

Belongs to the universal ribosomal protein uL22 family. As to quaternary structure, part of the 50S ribosomal subunit.

Its function is as follows. This protein binds specifically to 23S rRNA; its binding is stimulated by other ribosomal proteins, e.g. L4, L17, and L20. It is important during the early stages of 50S assembly. It makes multiple contacts with different domains of the 23S rRNA in the assembled 50S subunit and ribosome. The globular domain of the protein is located near the polypeptide exit tunnel on the outside of the subunit, while an extended beta-hairpin is found that lines the wall of the exit tunnel in the center of the 70S ribosome. The polypeptide is Large ribosomal subunit protein uL22 (Photorhabdus laumondii subsp. laumondii (strain DSM 15139 / CIP 105565 / TT01) (Photorhabdus luminescens subsp. laumondii)).